The primary structure comprises 90 residues: Small ribosomal subunit protein uS15c (90 aa).

This sequence belongs to the universal ribosomal protein uS15 family. As to quaternary structure, part of the 30S ribosomal subunit.

The protein localises to the plastid. It is found in the chloroplast. The polypeptide is Small ribosomal subunit protein uS15c (rps15) (Piper cenocladum (Ant piper)).